The chain runs to 378 residues: Erythronate-4-phosphate dehydrogenase (378 aa).

Residues Ser-45 and Thr-66 each coordinate substrate. NAD(+)-binding residues include Asp-146 and Thr-175. Arg-208 is a catalytic residue. Residue Asp-232 participates in NAD(+) binding. Glu-237 is a catalytic residue. The Proton donor role is filled by His-254. NAD(+) is bound at residue Gly-257. Residue Tyr-258 coordinates substrate.

Belongs to the D-isomer specific 2-hydroxyacid dehydrogenase family. PdxB subfamily. As to quaternary structure, homodimer.

It localises to the cytoplasm. The enzyme catalyses 4-phospho-D-erythronate + NAD(+) = (R)-3-hydroxy-2-oxo-4-phosphooxybutanoate + NADH + H(+). It functions in the pathway cofactor biosynthesis; pyridoxine 5'-phosphate biosynthesis; pyridoxine 5'-phosphate from D-erythrose 4-phosphate: step 2/5. In terms of biological role, catalyzes the oxidation of erythronate-4-phosphate to 3-hydroxy-2-oxo-4-phosphonooxybutanoate. The polypeptide is Erythronate-4-phosphate dehydrogenase (Klebsiella pneumoniae (strain 342)).